The sequence spans 223 residues: Deoxyribose-phosphate aldolase (223 aa).

The Proton donor/acceptor role is filled by Asp91. Residue Lys153 is the Schiff-base intermediate with acetaldehyde of the active site. Lys182 functions as the Proton donor/acceptor in the catalytic mechanism.

The protein belongs to the DeoC/FbaB aldolase family. DeoC type 1 subfamily.

The protein localises to the cytoplasm. It catalyses the reaction 2-deoxy-D-ribose 5-phosphate = D-glyceraldehyde 3-phosphate + acetaldehyde. It participates in carbohydrate degradation; 2-deoxy-D-ribose 1-phosphate degradation; D-glyceraldehyde 3-phosphate and acetaldehyde from 2-deoxy-alpha-D-ribose 1-phosphate: step 2/2. Functionally, catalyzes a reversible aldol reaction between acetaldehyde and D-glyceraldehyde 3-phosphate to generate 2-deoxy-D-ribose 5-phosphate. This chain is Deoxyribose-phosphate aldolase, found in Streptococcus pyogenes serotype M1.